Here is a 344-residue protein sequence, read N- to C-terminus: Fructose-1,6-bisphosphatase class 1 (344 aa).

Residues Glu107, Asp129, Leu131, and Asp132 each contribute to the Mg(2+) site. Residues Asn224, Tyr252, and Lys282 each coordinate substrate. Glu288 contacts Mg(2+).

It belongs to the FBPase class 1 family. Homotetramer. It depends on Mg(2+) as a cofactor.

Its subcellular location is the cytoplasm. It carries out the reaction beta-D-fructose 1,6-bisphosphate + H2O = beta-D-fructose 6-phosphate + phosphate. It participates in carbohydrate biosynthesis; Calvin cycle. In Synechococcus sp. (strain ATCC 27144 / PCC 6301 / SAUG 1402/1) (Anacystis nidulans), this protein is Fructose-1,6-bisphosphatase class 1.